A 199-amino-acid chain; its full sequence is NAD(P)H dehydrogenase (quinone) (199 aa).

A Flavodoxin-like domain is found at 4-190 (MLVLYYSAYG…DGARFQGRRV (187 aa)). FMN-binding positions include 10–15 (SAYGHM) and 78–80 (TRY). Tyrosine 12 contributes to the NAD(+) binding site. Tryptophan 98 contributes to the substrate binding site. FMN-binding positions include 113–119 (STATQYG) and histidine 134. A disordered region spans residues 161–181 (YGMTTTADGDGSRQPSAQELD). Polar residues predominate over residues 163–177 (MTTTADGDGSRQPSA).

It belongs to the WrbA family. FMN is required as a cofactor.

It carries out the reaction a quinone + NADH + H(+) = a quinol + NAD(+). The catalysed reaction is a quinone + NADPH + H(+) = a quinol + NADP(+). The sequence is that of NAD(P)H dehydrogenase (quinone) from Brucella canis (strain ATCC 23365 / NCTC 10854 / RM-666).